A 487-amino-acid chain; its full sequence is MRILQACAEIFPLLKTGGLADVAGALPPALRALGAEVRVVVPGFPAILAGLVDAIEVARLEPPPAMVMARGARLLYGRLPACDVDAYVINSPDHYHRDGGPYNDARQHPYDDNHLRFGLLGWVAAKLADGLDPYWAPRVVHAHDWHAALAPAYLRALEWARGRRLAGSVYTVHNLAYQGFFPAHHFGDLGLPAAYNQVHGLEFYGQISFMKGGLYFADRITTVSPTYAREIQGAEQGCGLDGLLRDRDADLSGILNGVDDAVWNPAGDALIPATYTRRKLTGKAQCKATLQAELGLAEDPAVPLLCVVSRLTEQKGLHLVLQALPALIERGFQFALLGSGDAGMENEFRRLAEQHPTAAAVRLGYDEAFAHRLIAGSDLILVPSRFEPCGLTQLYGLKYGTLPVVRRVGGLVDTVADARLETLDHDATGFVFDDFSADGLIGACLRAKALFRRRADWLQVQRRGMQQPFGWEDSARQYLKLYQQVAA.

An ADP-alpha-D-glucose-binding site is contributed by K15.

This sequence belongs to the glycosyltransferase 1 family. Bacterial/plant glycogen synthase subfamily.

It carries out the reaction [(1-&gt;4)-alpha-D-glucosyl](n) + ADP-alpha-D-glucose = [(1-&gt;4)-alpha-D-glucosyl](n+1) + ADP + H(+). It functions in the pathway glycan biosynthesis; glycogen biosynthesis. Its function is as follows. Synthesizes alpha-1,4-glucan chains using ADP-glucose. This is Glycogen synthase from Leptothrix cholodnii (strain ATCC 51168 / LMG 8142 / SP-6) (Leptothrix discophora (strain SP-6)).